The primary structure comprises 269 residues: CCAAT/enhancer-binding protein delta (269 aa).

Disordered regions lie at residues 1 to 48, 97 to 133, and 151 to 219; these read MSAA…PGAA, PLEL…APGS, and AAGQ…NQEM. N-acetylserine is present on Ser-2. Composition is skewed to low complexity over residues 36 to 48 and 97 to 107; these read GAEP…PGAA and PLELLPGGPAR. Lys-120 participates in a covalent cross-link: Glycyl lysine isopeptide (Lys-Gly) (interchain with G-Cter in SUMO). Residues 155-175 are compositionally biased toward pro residues; sequence PTPPTSPEPPRSSPRQTPAPG. The span at 177–201 shows a compositional bias: basic and acidic residues; it reads AREKSAGKRGPDRGSPEYRQRRERN. Residues 191–254 form the bZIP domain; the sequence is SPEYRQRRER…AGLRQFFKQL (64 aa). The basic motif stretch occupies residues 195–222; that stretch reads RQRRERNNIAVRKSRDKAKRRNQEMQQK. Residues 226-254 are leucine-zipper; that stretch reads LSAENEKLHQRVEQLTRDLAGLRQFFKQL.

The protein belongs to the bZIP family. C/EBP subfamily. In terms of assembly, binds DNA as a homodimer and as a heterodimer. Can form stable heterodimers with CEBPB. Can form stable heterodimers with CEBPA and CEBPE. Directly interacts with SPI1/PU.1; this interaction does not affect DNA-binding properties of each partner. Interacts with PRDM16.

It is found in the nucleus. Functionally, transcription activator that recognizes two different DNA motifs: the CCAAT homology common to many promoters and the enhanced core homology common to many enhancers. Important transcription factor regulating the expression of genes involved in immune and inflammatory responses. Transcriptional activator that enhances IL6 transcription alone and as heterodimer with CEBPB. This is CCAAT/enhancer-binding protein delta (CEBPD) from Homo sapiens (Human).